Consider the following 1117-residue polypeptide: Protocadherin-11 X-linked (1117 aa).

Positions 1–23 are cleaved as a signal peptide; that stretch reads MDLLSGTHIFAVLLACIVFQSGA. The Extracellular segment spans residues 24–812; sequence QEKNYTIREE…ASSPSSDYVK (789 aa). N-linked (GlcNAc...) asparagine glycans are attached at residues asparagine 27 and asparagine 48. Cadherin domains lie at 27 to 139, 140 to 249, 250 to 355, 362 to 466, 467 to 570, 571 to 673, and 677 to 795; these read NYTI…APLF, PATV…RPVF, KENE…IPSI, NPIN…APVF, TQPF…SPVF, THNE…KPVF, and SSNY…TPVT. Asparagine 344 carries N-linked (GlcNAc...) asparagine glycosylation. Residue asparagine 553 is glycosylated (N-linked (GlcNAc...) asparagine). A helical membrane pass occupies residues 813-833; sequence IVVAIVAGTITVILVIFITAV. Residues 834–1117 lie on the Cytoplasmic side of the membrane; it reads VRCQQSPHLK…DGNSDPESGK (284 aa). A compositionally biased stretch (polar residues) spans 1029–1039; sequence TVEIWTHPQPQ. Positions 1029-1117 are disordered; that stretch reads TVEIWTHPQP…DGNSDPESGK (89 aa).

In terms of tissue distribution, expressed in adrenal gland, brain, heart, kidney, lung, prostate, skeletal muscle, testis and thymus.

It is found in the cell membrane. Potential calcium-dependent cell-adhesion protein. The sequence is that of Protocadherin-11 X-linked (PCDH11X) from Sus scrofa (Pig).